Reading from the N-terminus, the 1972-residue chain is Myosin-11 (1972 aa).

3 positions are modified to phosphoserine: Ser8, Ser23, and Ser40. A Myosin N-terminal SH3-like domain is found at 31-81; sequence AAKRLVWVPSEKQGFEAASIKEEKGDEVVVELVENGKKVTVGKDDIQKMNP. Residues 85–783 enclose the Myosin motor domain; sequence SKVEDMAELT…VLAHLEEERD (699 aa). The residue at position 129 (Lys129) is an N6,N6,N6-trimethyllysine. 178–185 is an ATP binding site; that stretch reads GESGAGKT. Actin-binding regions lie at residues 661–683 and 762–776; these read LGKLMTTLRNTTPNFVRCIIPNH and RIGQSKIFFRTGVLA. Residues 786–815 enclose the IQ domain; it reads ITDVIMAFQAMCRGYLARKAFAKRQQQLTA. A coiled-coil region spans residues 844 to 1934; the sequence is LLQVTRQEEE…KSKLRRGNET (1091 aa). The segment at 858–882 is disordered; it reads EDELQKTKERQQKAENELKELEQKH. Phosphothreonine is present on Thr1177. 2 positions are modified to phosphoserine: Ser1684 and Ser1722. Disordered stretches follow at residues 1744–1800 and 1866–1972; these read ELEE…LRSK and EQYK…KASE. Over residues 1762 to 1788 the composition is skewed to polar residues; sequence ATQQAEQLSNELATERSTAQKNESARQ. 2 stretches are compositionally biased toward basic and acidic residues: residues 1789–1800 and 1866–1876; these read QLERQNKELRSK and EQYKEQAEKGN. The C-terminal stretch occupies residues 1935 to 1972; the sequence is SFVPSRRSGGRRVIENADGSEEETDTRDADFNGTKASE. Ser1954 is subject to Phosphoserine. Residue Thr1958 is modified to Phosphothreonine. Ser1971 is subject to Phosphoserine.

It belongs to the TRAFAC class myosin-kinesin ATPase superfamily. Myosin family. As to quaternary structure, muscle myosin is a hexameric protein that consists of 2 heavy chain subunits (MHC), 2 alkali light chain subunits (MLC) and 2 regulatory light chain subunits (MLC-2). As to expression, smooth muscle; expressed in the umbilical artery, bladder, esophagus and trachea. Isoform 1 is mostly found in slowly contracting tonic muscles.

Its subcellular location is the melanosome. Its function is as follows. Muscle contraction. This chain is Myosin-11 (MYH11), found in Homo sapiens (Human).